The sequence spans 509 residues: Lengsin (509 aa).

The segment at 1-34 (MNNEEDLLQEDSTRDEGNETEANSMNTLRRTRKK) is disordered. The GS beta-grasp domain occupies 83-177 (NRLQFVRFEA…VICDTFTVTG (95 aa)). Residues 184 to 509 (PRYIAKRQLS…ERNKFLEYFI (326 aa)) form the GS catalytic domain.

It belongs to the glutamine synthetase family. As to quaternary structure, dodecamer. Interacts with BFSP2 and VIM. In terms of tissue distribution, abundantly expressed in lens.

Functionally, may act as a component of the cytoskeleton or as a chaperone for the reorganization of intermediate filament proteins during terminal differentiation in the lens. Does not seem to have enzymatic activity. In Homo sapiens (Human), this protein is Lengsin (LGSN).